Reading from the N-terminus, the 463-residue chain is MEEVCSICLEVLVDKEAFTEPCLHYYHNECIKEWTKRANTCPKCRRDYSQIRIGEEVISVKNRSLELHLVDETLEETRERLISYTNLCALCEDPSTSLIYCESCGGSFHFNCIGIGDELDSEWCCPLCGMFQNHLGEASNRNLISATPVGEGRRRVTSIVNTRRTNSIYRSHSNRPAQRAHLMTDSDYTMIVDQHREKLLESQLQESNTQSSGEEESWKLLDEALKSGTQNSQSSEFSTENNVVPLKNTHELGRKLKKPRRASGIKKNVVERSSSHQSTQILKPSSSLISDLLLETRGNSRHPSFTNSTQKLTVEALQSHDPTLKLNIPKTETLSLDQKIVIQKLFIKPRLRNLYDSNTLSKDNYIEINKIICRRLYDKFLQDQLALAYLKQVLEVKERLHGHDLKQFLAQFTHWSELNDFTDDKWQKQETEGSCNHKQTQILSMFDSIIDTMLQNELHKLLT.

Residues 5–45 form an RING-type; atypical zinc finger; that stretch reads CSICLEVLVDKEAFTEPCLHYYHNECIKEWTKRANTCPKCR. The PHD-type zinc-finger motif lies at 85–131; it reads TNLCALCEDPSTSLIYCESCGGSFHFNCIGIGDELDSEWCCPLCGMF. Polar residues predominate over residues 229–242; sequence TQNSQSSEFSTENN. Positions 229-281 are disordered; it reads TQNSQSSEFSTENNVVPLKNTHELGRKLKKPRRASGIKKNVVERSSSHQSTQI. Over residues 255 to 264 the composition is skewed to basic residues; that stretch reads KLKKPRRASG.

In terms of assembly, interacts with ATG28.

In terms of biological role, micropexophagy-specific protein required for efficient micropexophagic apparatus (MIPA) formation but not for general autophagy. In Komagataella phaffii (strain GS115 / ATCC 20864) (Yeast), this protein is Autophagy-related protein 36 (ATG35).